The sequence spans 305 residues: Chromatin modification-related protein EAF3 (305 aa).

Residues 14-67 (VLAYHGPLLYEARVILAEVWDESNTLLGTVGPHYFIHYKGWKQTWDEWVPESRL) enclose the Tudor-knot domain. Positions 86-127 (AKKGRSTGGSGGTGSPGAGKGGLKDKKKDTKKRGRDAMESES) are disordered. Residues 91-106 (STGGSGGTGSPGAGKG) are compositionally biased toward gly residues. An MRG domain is found at 131-304 (KRPEVKIVIP…TTTHYQNLSR (174 aa)).

This sequence belongs to the MRG family. In terms of assembly, component of the NuA4 histone acetyltransferase complex.

It is found in the nucleus. In terms of biological role, involved in deacetylation of histones, chromatin assembly and chromosome segregation. May act as a transcriptional oscillator, directing histone deacetylases to specific chromosomal domains. Component of the NuA4 histone acetyltransferase complex which is involved in transcriptional activation of selected genes principally by acetylation of nucleosomal histone H4 and H2A. The NuA4 complex is also involved in DNA repair. This Cryptococcus neoformans var. neoformans serotype D (strain B-3501A) (Filobasidiella neoformans) protein is Chromatin modification-related protein EAF3 (EAF3).